A 524-amino-acid chain; its full sequence is Na(+)/H(+) antiporter NhaB (524 aa).

The next 9 helical transmembrane spans lie at 13–33, 98–118, 140–160, 239–259, 304–324, 325–345, 358–378, 448–468, and 479–499; these read FLGNSPDWYKLAIMGFLIINP, LLLVFMVAGIYFMKQLLLFVF, AFLSAFLDALTVIAVVISVSV, FFIRMLPVTLPVFIFGLLVCL, AIIGVWLVLALALHLAEVGLV, GLSVIILATSFCGITNEHSLG, LTVFFAVVAVIIEQSLFTPII, ATPNGQAAFLFLLTSALAPLI, and ALPYTLVMTIVGLLGVEFLLV.

The protein belongs to the NhaB Na(+)/H(+) (TC 2.A.34) antiporter family.

It localises to the cell inner membrane. The enzyme catalyses 2 Na(+)(in) + 3 H(+)(out) = 2 Na(+)(out) + 3 H(+)(in). Na(+)/H(+) antiporter that extrudes sodium in exchange for external protons. The protein is Na(+)/H(+) antiporter NhaB of Yersinia pestis (strain Pestoides F).